We begin with the raw amino-acid sequence, 143 residues long: FAD synthase (143 aa).

Residues 9-10 (TF), 14-17 (HPGH), and Asp-92 each bind ATP.

This sequence belongs to the archaeal FAD synthase family. As to quaternary structure, homodimer. The cofactor is a divalent metal cation.

The catalysed reaction is FMN + ATP + H(+) = FAD + diphosphate. It functions in the pathway cofactor biosynthesis; FAD biosynthesis; FAD from FMN: step 1/1. Catalyzes the transfer of the AMP portion of ATP to flavin mononucleotide (FMN) to produce flavin adenine dinucleotide (FAD) coenzyme. The chain is FAD synthase from Methanococcoides burtonii (strain DSM 6242 / NBRC 107633 / OCM 468 / ACE-M).